Reading from the N-terminus, the 456-residue chain is Chordin-like protein 1 (456 aa).

The first 28 residues, 1 to 28 (MRRKWRSEDFHFVFFGVLCLLLIDRGKL), serve as a signal peptide directing secretion. VWFC domains lie at 36-101 (TYCV…PRCP), 115-181 (KSCE…PVCR), and 262-327 (RVCV…KVCP). A glycan (N-linked (GlcNAc...) asparagine) is linked at N120. The Cell attachment site motif lies at 181–183 (RGD). N-linked (GlcNAc...) asparagine glycosylation occurs at N295.

As to expression, mainly expressed in the ventral retina.

It is found in the secreted. Functionally, seems to antagonize the function of BMP4 by binding to it and preventing its interaction with receptors. The chain is Chordin-like protein 1 (CHRDL1) from Gallus gallus (Chicken).